The primary structure comprises 623 residues: Cell pattern formation-associated protein stuA (623 aa).

Polar residues predominate over residues 13–31 (QHMQSAGQPQQPQTVTSGP). Residues 13–111 (QHMQSAGQPQ…DTTGQHPPPG (99 aa)) are disordered. Residues 115–221 (RVTATLWEDE…HNIGALLYHP (107 aa)) form the HTH APSES-type domain. Positions 149 to 170 (GTKLLNVAGMTRGRRDGILKSE) form a DNA-binding region, H-T-H motif. Disordered stretches follow at residues 232–270 (AAAE…PQSS) and 332–623 (ARSM…PRQR). Residues 335–374 (MPTTPATTPPGSMQPYGSAQSFDGSRQQMYNAPSQQSPYP) are compositionally biased toward polar residues. Over residues 396–408 (GPPSSRPSGSAPS) the composition is skewed to low complexity. Residues 423 to 446 (EHGHQSHAGEEDGEHEQHDAEYTH) show a composition bias toward basic and acidic residues. The span at 542–553 (APPADMANPMPN) shows a compositional bias: low complexity. The nuclear localization domain stretch occupies residues 569 to 594 (KRGREGDDDLSRPVGDVPGMDMKRRK). Residues 570 to 579 (RGREGDDDLS) show a composition bias toward basic and acidic residues.

The protein belongs to the EFG1/PHD1/stuA family.

It localises to the nucleus. Transcription factor that regulates asexual reproduction. Binds the StuA-response elements (StRE) with the consensus sequence 5'-(A/T)CGCG(T/A)N(A/C)-3' at the promoters of target genes. Controls conidiation by positively regulating the expression of brlA and abaA. Positively regulates the cephalosporin biosynthesis gene cluster. Also involved hyphal fragmentation and cell wall integrity. This is Cell pattern formation-associated protein stuA from Hapsidospora chrysogenum (strain ATCC 11550 / CBS 779.69 / DSM 880 / IAM 14645 / JCM 23072 / IMI 49137) (Acremonium chrysogenum).